The chain runs to 1223 residues: Rho family-interacting cell polarization regulator 1 (1223 aa).

The residue at position 22 (S22) is a Phosphoserine. The stretch at 89-114 forms a coiled coil; the sequence is LTAYLEVHQQEQEKLQGQIRESKRNS. 2 positions are modified to phosphoserine: S349 and S351. A Phosphothreonine modification is found at T355. The disordered stretch occupies residues 375–411; sequence NGTAWSLSSESSDDSSSPQLSGTARHSPAPRPLVQQP. The span at 380–395 shows a compositional bias: low complexity; it reads SLSSESSDDSSSPQLS. Residues S456 and S459 each carry the phosphoserine modification. Disordered stretches follow at residues 475–769 and 856–889; these read ESLA…APQH and FLNE…SPSA. Composition is skewed to low complexity over residues 505–523 and 546–564; these read GHSA…PTST and PGPT…TTTH. The span at 565 to 592 shows a compositional bias: polar residues; the sequence is SAPSPLTHTTTGSTHKPIISTLTTTGPT. 2 stretches are compositionally biased toward low complexity: residues 601 to 650 and 659 to 675; these read TTTS…PTPS and TSPT…TTSP. Polar residues predominate over residues 680–695; the sequence is VSPSTSLELATLSSPS. Positions 858–867 are enriched in acidic residues; the sequence is NEDEDEDNDV. Phosphoserine occurs at positions 874 and 875.

The protein belongs to the RIPOR family. In terms of assembly, interacts (via N-terminus) with RHOA (GTP-bound form); this interaction links active RHOA to STK24 and STK26 kinases. Interacts with RHOB. Interacts with RHOC. Interacts (via C-terminus) with PDCD10; this interaction occurs in a Rho-independent manner. Interacts (via C-terminus) with STK24; this interaction occurs in a PDCD10-dependent and Rho-independent manner. Interacts (via C-terminus) with STK26; this interaction occurs in a PDCD10-dependent and Rho-independent manner. Interacts (via N-terminus) with 14-3-3 proteins; these interactions occur in a Rho-dependent manner.

It localises to the cytoplasm. The protein resides in the golgi apparatus. In terms of biological role, downstream effector protein for Rho-type small GTPases that plays a role in cell polarity and directional migration. Acts as an adapter protein, linking active Rho proteins to STK24 and STK26 kinases, and hence positively regulates Golgi reorientation in polarized cell migration upon Rho activation. Involved in the subcellular relocation of STK26 from the Golgi to cytoplasm punctae in a Rho- and PDCD10-dependent manner upon serum stimulation. In Homo sapiens (Human), this protein is Rho family-interacting cell polarization regulator 1 (RIPOR1).